The chain runs to 344 residues: S-adenosylmethionine:tRNA ribosyltransferase-isomerase (344 aa).

Belongs to the QueA family. Monomer.

The protein localises to the cytoplasm. The catalysed reaction is 7-aminomethyl-7-carbaguanosine(34) in tRNA + S-adenosyl-L-methionine = epoxyqueuosine(34) in tRNA + adenine + L-methionine + 2 H(+). It participates in tRNA modification; tRNA-queuosine biosynthesis. In terms of biological role, transfers and isomerizes the ribose moiety from AdoMet to the 7-aminomethyl group of 7-deazaguanine (preQ1-tRNA) to give epoxyqueuosine (oQ-tRNA). The chain is S-adenosylmethionine:tRNA ribosyltransferase-isomerase from Acinetobacter baylyi (strain ATCC 33305 / BD413 / ADP1).